Reading from the N-terminus, the 484-residue chain is Chromosomal replication initiator protein DnaA (484 aa).

Residues 1–73 (MQEGKNIWSL…EILIEKGHST (73 aa)) are domain I, interacts with DnaA modulators. The tract at residues 73-140 (TINVEFIHSQ…EEIHIKYRNP (68 aa)) is domain II. The interval 141–357 (FLKKKYTFEN…AAVTKLKAHI (217 aa)) is domain III, AAA+ region. G185, G187, K188, and T189 together coordinate ATP. Positions 358–484 (DLEDIEIDTN…IELMNKINKN (127 aa)) are domain IV, binds dsDNA.

The protein belongs to the DnaA family. As to quaternary structure, oligomerizes as a right-handed, spiral filament on DNA at oriC.

It is found in the cytoplasm. Plays an essential role in the initiation and regulation of chromosomal replication. ATP-DnaA binds to the origin of replication (oriC) to initiate formation of the DNA replication initiation complex once per cell cycle. Binds the DnaA box (a 9 base pair repeat at the origin) and separates the double-stranded (ds)DNA. Forms a right-handed helical filament on oriC DNA; dsDNA binds to the exterior of the filament while single-stranded (ss)DNA is stabiized in the filament's interior. The ATP-DnaA-oriC complex binds and stabilizes one strand of the AT-rich DNA unwinding element (DUE), permitting loading of DNA polymerase. After initiation quickly degrades to an ADP-DnaA complex that is not apt for DNA replication. Binds acidic phospholipids. This chain is Chromosomal replication initiator protein DnaA, found in Borrelia recurrentis (strain A1).